We begin with the raw amino-acid sequence, 156 residues long: Ribosome maturation factor RimP (156 aa).

Belongs to the RimP family.

It localises to the cytoplasm. Functionally, required for maturation of 30S ribosomal subunits. The chain is Ribosome maturation factor RimP from Exiguobacterium sp. (strain ATCC BAA-1283 / AT1b).